Reading from the N-terminus, the 362-residue chain is Probable peptidyl-prolyl cis-trans isomerase C27F1.06c (362 aa).

Ser-69 is modified (phosphoserine). Residues 144–274 (DEFSSDEEEM…KVKGDGPAAK (131 aa)) are disordered. 2 stretches are compositionally biased toward acidic residues: residues 146–167 (FSSD…EEEE) and 175–189 (LNSD…EEEI). Ser-177 is modified (phosphoserine). The segment covering 190 to 218 (LEKPVPKDEVAEKHSKDKLKKEEKEKKTA) has biased composition (basic and acidic residues). The PPIase FKBP-type domain maps to 276-362 (KKRVSMRYIG…VFDVKLLAVN (87 aa)).

It belongs to the FKBP-type PPIase family. FKBP3/4 subfamily.

The catalysed reaction is [protein]-peptidylproline (omega=180) = [protein]-peptidylproline (omega=0). In terms of biological role, PPIases accelerate the folding of proteins. It catalyzes the cis-trans isomerization of proline imidic peptide bonds in oligopeptides. This is Probable peptidyl-prolyl cis-trans isomerase C27F1.06c from Schizosaccharomyces pombe (strain 972 / ATCC 24843) (Fission yeast).